The following is a 363-amino-acid chain: Chorismate synthase (363 aa).

Residues 36–58 (SESDIQGDLDRRRPGQSKITTPR) form a disordered region. Arginine 47 is a binding site for NADP(+). FMN-binding positions include 124 to 126 (RSS), glycine 286, 301 to 305 (KPTAT), and arginine 327.

Belongs to the chorismate synthase family. As to quaternary structure, homotetramer. FMNH2 is required as a cofactor.

The enzyme catalyses 5-O-(1-carboxyvinyl)-3-phosphoshikimate = chorismate + phosphate. It participates in metabolic intermediate biosynthesis; chorismate biosynthesis; chorismate from D-erythrose 4-phosphate and phosphoenolpyruvate: step 7/7. Its function is as follows. Catalyzes the anti-1,4-elimination of the C-3 phosphate and the C-6 proR hydrogen from 5-enolpyruvylshikimate-3-phosphate (EPSP) to yield chorismate, which is the branch point compound that serves as the starting substrate for the three terminal pathways of aromatic amino acid biosynthesis. This reaction introduces a second double bond into the aromatic ring system. This chain is Chorismate synthase, found in Crocosphaera subtropica (strain ATCC 51142 / BH68) (Cyanothece sp. (strain ATCC 51142)).